We begin with the raw amino-acid sequence, 233 residues long: Probable O-methyltransferase Rv1703c (233 aa).

S-adenosyl-L-methionine-binding positions include valine 55, glutamate 77, 79 to 80 (GT), and glutamate 102. Aspartate 157 is an a divalent metal cation binding site. Aspartate 159 lines the S-adenosyl-L-methionine pocket. A divalent metal cation-binding residues include aspartate 185 and asparagine 186.

This sequence belongs to the class I-like SAM-binding methyltransferase superfamily. Cation-dependent O-methyltransferase family.

Its function is as follows. Specifically methylates an O atom of its substrate. The chain is Probable O-methyltransferase Rv1703c from Mycobacterium tuberculosis (strain ATCC 25618 / H37Rv).